Reading from the N-terminus, the 308-residue chain is MTKRKHVAVLLGGWSSEREVSLRSGKACADALERCGYQVTRVDVQRNIGTVLDQLKPDVALVMLHGRPGEDGTIQGVLETLGIPYSHSGVLASALAMQKDLAKTVMATAGVPVAEGLTLSRAEVAKRHVMAPPYVIKPVADGSSVGVFMVTEAHEHPPQELFRDDWPHGEQLLVEKYVAGKELTCAVVKGEPTGVIEIVQTNKFYDYEAKYSPGGSNHILPASLLPFVYQEVRRLTLAAHVALGCRGVSRADFRFDDRIEGTAGLICLEVNTQPGMTETSLVPELAADAGITFDELVQWMVEDASLGR.

The ATP-grasp domain maps to 103 to 302 (KTVMATAGVP…FDELVQWMVE (200 aa)). 130 to 184 (MAPPYVIKPVADGSSVGVFMVTEAHEHPPQELFRDDWPHGEQLLVEKYVAGKELT) is a binding site for ATP. Aspartate 252, glutamate 269, and asparagine 271 together coordinate Mg(2+).

Belongs to the D-alanine--D-alanine ligase family. Requires Mg(2+) as cofactor. The cofactor is Mn(2+).

It is found in the cytoplasm. The enzyme catalyses 2 D-alanine + ATP = D-alanyl-D-alanine + ADP + phosphate + H(+). It functions in the pathway cell wall biogenesis; peptidoglycan biosynthesis. In terms of biological role, cell wall formation. In Rhodopseudomonas palustris (strain BisB18), this protein is D-alanine--D-alanine ligase.